The sequence spans 138 residues: Phosphoribosyl-AMP cyclohydrolase (138 aa).

Position 84 (Asp84) interacts with Mg(2+). A Zn(2+)-binding site is contributed by Cys85. 2 residues coordinate Mg(2+): Asp86 and Asp88. Zn(2+) is bound by residues Cys102 and Cys109.

Belongs to the PRA-CH family. In terms of assembly, homodimer. Mg(2+) serves as cofactor. Zn(2+) is required as a cofactor.

The protein localises to the cytoplasm. It catalyses the reaction 1-(5-phospho-beta-D-ribosyl)-5'-AMP + H2O = 1-(5-phospho-beta-D-ribosyl)-5-[(5-phospho-beta-D-ribosylamino)methylideneamino]imidazole-4-carboxamide. It functions in the pathway amino-acid biosynthesis; L-histidine biosynthesis; L-histidine from 5-phospho-alpha-D-ribose 1-diphosphate: step 3/9. Catalyzes the hydrolysis of the adenine ring of phosphoribosyl-AMP. This chain is Phosphoribosyl-AMP cyclohydrolase, found in Burkholderia multivorans (strain ATCC 17616 / 249).